The sequence spans 214 residues: uncharacterized protein (214 aa).

Residues 1-49 (MATRGAVAAAASTIWKHRRNPSLRSLSRHFNPNFNHRIIPTGFKYQVRA) constitute a chloroplast transit peptide.

The protein resides in the plastid. It is found in the chloroplast. This is an uncharacterized protein from Arabidopsis thaliana (Mouse-ear cress).